The following is a 342-amino-acid chain: MNHSLKPWNTFGIDHNAQHIVCAEDEQQLLNAWQHATAEGQPVLILGEGSNVLFLEDYRGTVIINRIKGIEIHDEPDAWYLHVGAGENWHRLVKYTLQEGMPGLENLALIPGCIGSSPIQNIGAYGVELQRVCAYVDCVELATGKQVRLTAKECRFGYRDSIFKHEYQDRFAIVAVGLRLPKEWQPVLTYGDLTRLDPSTVTPQQVFDAVCHMRTTKLPDPKVNGNAGSFFKNPVVSAETANALLAQFPTAPHYPQVDGSVKLAAGWLIDQCQLKGTQIGGAAVHRQQALVLINEHDAKSEDVVQLAHHVRQKVGEKFNVWLEPEVRFIGASGEVSAVETIS.

An FAD-binding PCMH-type domain is found at 13–183 (IDHNAQHIVC…VAVGLRLPKE (171 aa)). Residue Arg159 is part of the active site. Position 190 (Tyr190) interacts with substrate. Ser229 (proton donor) is an active-site residue. Glu325 is an active-site residue.

The protein belongs to the MurB family. The cofactor is FAD.

The protein resides in the cytoplasm. The enzyme catalyses UDP-N-acetyl-alpha-D-muramate + NADP(+) = UDP-N-acetyl-3-O-(1-carboxyvinyl)-alpha-D-glucosamine + NADPH + H(+). It participates in cell wall biogenesis; peptidoglycan biosynthesis. Its function is as follows. Cell wall formation. The sequence is that of UDP-N-acetylenolpyruvoylglucosamine reductase from Escherichia coli O6:H1 (strain CFT073 / ATCC 700928 / UPEC).